Consider the following 472-residue polypeptide: Adenylyl cyclase-associated protein 1 (472 aa).

An N-acetylalanine modification is found at alanine 2. Residue tyrosine 31 is modified to Phosphotyrosine. Position 34 is a phosphoserine (serine 34). Lysine 81 carries the N6-acetyllysine modification. Residues 216-253 (ELSGLPSGPSAGSGPPPPPPGPPPPPVPTSSGSDDSAS) form a disordered region. Positions 218–228 (SGLPSGPSAGS) are enriched in low complexity. Pro residues predominate over residues 229-243 (GPPPPPPGPPPPPVP). Residues 244 to 253 (TSSGSDDSAS) show a composition bias toward low complexity. Lysine 287 is modified (N6-methyllysine). Residues serine 290, serine 295, and serine 301 each carry the phosphoserine modification. The tract at residues 290–312 (SGLIRSGPKPFSASKPDPPKPVA) is disordered. The C-CAP/cofactor C-like domain occupies 307–450 (PPKPVAKKEP…EGGDFNEFPV (144 aa)). A Glycyl lysine isopeptide (Lys-Gly) (interchain with G-Cter in SUMO1) cross-link involves residue lysine 345.

The protein belongs to the CAP family. As to quaternary structure, homodimer. Binds actin monomers.

Its subcellular location is the cell membrane. In terms of biological role, directly regulates filament dynamics and has been implicated in a number of complex developmental and morphological processes, including mRNA localization and the establishment of cell polarity. The sequence is that of Adenylyl cyclase-associated protein 1 (CAP1) from Bos taurus (Bovine).